The following is a 138-amino-acid chain: Large ribosomal subunit protein bL17 (138 aa).

It belongs to the bacterial ribosomal protein bL17 family. As to quaternary structure, part of the 50S ribosomal subunit. Contacts protein L32.

This chain is Large ribosomal subunit protein bL17, found in Halorhodospira halophila (strain DSM 244 / SL1) (Ectothiorhodospira halophila (strain DSM 244 / SL1)).